The primary structure comprises 494 residues: Cobyric acid synthase (494 aa).

One can recognise a GATase cobBQ-type domain in the interval 252-444 (DLNIAVIRLP…LHGLFDNGPW (193 aa)). C333 (nucleophile) is an active-site residue. H436 is a catalytic residue.

It belongs to the CobB/CobQ family. CobQ subfamily.

Its pathway is cofactor biosynthesis; adenosylcobalamin biosynthesis. Functionally, catalyzes amidations at positions B, D, E, and G on adenosylcobyrinic A,C-diamide. NH(2) groups are provided by glutamine, and one molecule of ATP is hydrogenolyzed for each amidation. This Nostoc punctiforme (strain ATCC 29133 / PCC 73102) protein is Cobyric acid synthase.